Reading from the N-terminus, the 374-residue chain is Queuine tRNA-ribosyltransferase (374 aa).

Asp89 functions as the Proton acceptor in the catalytic mechanism. Substrate-binding positions include 89-93, Asp143, Gln187, and Gly214; that span reads DSGGF. Positions 245–251 are RNA binding; sequence GVGKPED. The Nucleophile role is filled by Asp264. The interval 269–273 is RNA binding; important for wobble base 34 recognition; the sequence is TRNAR. Positions 302, 304, 307, and 333 each coordinate Zn(2+).

Belongs to the queuine tRNA-ribosyltransferase family. Homodimer. Within each dimer, one monomer is responsible for RNA recognition and catalysis, while the other monomer binds to the replacement base PreQ1. Zn(2+) is required as a cofactor.

The catalysed reaction is 7-aminomethyl-7-carbaguanine + guanosine(34) in tRNA = 7-aminomethyl-7-carbaguanosine(34) in tRNA + guanine. It functions in the pathway tRNA modification; tRNA-queuosine biosynthesis. Functionally, catalyzes the base-exchange of a guanine (G) residue with the queuine precursor 7-aminomethyl-7-deazaguanine (PreQ1) at position 34 (anticodon wobble position) in tRNAs with GU(N) anticodons (tRNA-Asp, -Asn, -His and -Tyr). Catalysis occurs through a double-displacement mechanism. The nucleophile active site attacks the C1' of nucleotide 34 to detach the guanine base from the RNA, forming a covalent enzyme-RNA intermediate. The proton acceptor active site deprotonates the incoming PreQ1, allowing a nucleophilic attack on the C1' of the ribose to form the product. After dissociation, two additional enzymatic reactions on the tRNA convert PreQ1 to queuine (Q), resulting in the hypermodified nucleoside queuosine (7-(((4,5-cis-dihydroxy-2-cyclopenten-1-yl)amino)methyl)-7-deazaguanosine). This is Queuine tRNA-ribosyltransferase from Shewanella loihica (strain ATCC BAA-1088 / PV-4).